A 2035-amino-acid polypeptide reads, in one-letter code: Envoplakin (2035 aa).

Residues 1-27 (MFKGLSKGSQGKGSPKGSPAKGSPKGS) show a composition bias toward low complexity. 2 disordered regions span residues 1 to 37 (MFKG…AATQ) and 63 to 84 (KLQQ…QETG). Positions 1–841 (MFKGLSKGSQ…LEPALAVSAP (841 aa)) are globular 1. The interval 12-28 (KGSPKGSPAKGSPKGSP) is 4 X 4 AA tandem repeats of K-G-S-P. Residues 71 to 84 (GEQNQALQHQQETG) are compositionally biased toward polar residues. The Spectrin repeat unit spans residues 229–330 (YTHLQGCTKQ…LCICQESQLQ (102 aa)). The tract at residues 400–419 (QEVAPLPQRRNPSKQPLHVD) is disordered. The SH3 domain maps to 413 to 470 (KQPLHVDSICDWDSGEVQLLRGERYTLKDNADPYTWLVQGPGGETKSAPAACLCIPAP). A coiled-coil region spans residues 842 to 1664 (KRLRVISLQE…EKERTLRDLH (823 aa)). The central fibrous rod domain stretch occupies residues 842–1674 (KRLRVISLQE…TKVSREELNQ (833 aa)). The stretch at 1186 to 1227 (KQKPKVQLQERVSEIFQVLPETEQEIRRLRAQLQETGSKKSG) is one Plectin 1 repeat. A Phosphoserine modification is found at S1576. Residues 1607-1631 (KQQKARQLQEEGRLLSQKTESERQK) show a composition bias toward basic and acidic residues. The tract at residues 1607–1637 (KQQKARQLQEEGRLLSQKTESERQKAAQRSQ) is disordered. The tract at residues 1675–2035 (ETQTRETNLS…SPTLPRSCVR (361 aa)) is globular 2. The stretch at 1679–1714 (RETNLSTKICILEPETGNDMSPYEAYKRGVIDRGQY) is one Plectin 2 repeat. Phosphoserine is present on S1800. 5 Plectin repeats span residues 1819–1856 (FGLT…PITG), 1857–1894 (QKLL…NTST), 1895–1932 (QRLL…QESV), 1933–1970 (LPHL…EDLG), and 1971–2008 (QLLQ…PLSG). The residue at position 2026 (S2026) is a Phosphoserine.

This sequence belongs to the plakin or cytolinker family. In terms of assembly, may form a homodimer or a heterodimer with PPL.

The protein resides in the cell junction. The protein localises to the desmosome. It localises to the cornified envelope. Its subcellular location is the cytoplasm. It is found in the cytoskeleton. Its function is as follows. Component of the cornified envelope of keratinocytes. May link the cornified envelope to desmosomes and intermediate filaments. This is Envoplakin (Evpl) from Mus musculus (Mouse).